Consider the following 395-residue polypeptide: MIIKPKVRGFICTNAHPEGCAANVREQIDFVKSQGEIADGPKKVLVIGASTGYGLASRITAAFGCGAATLGVFFEKPGTERKTGSAGFYNSVGFHAEAEKAGLYAKSINGDAFSDEIKAKAIDVIKRDLGKVDLVVYSLASPRRTDPKTGELYSSVLKPIGQSYTAKNLNTDTLKIADMTIEAANEEEIANTVKVMGGEDWELWVEALKEADVLAENAKTVAYTYIGDKLTWPIYGKATIGRAKEDLDRAATAINQKLADLGGSANVAVLKALVTQSSSAIPIMPLYISILYKVMKEEGTHEGCIEQLYRLFTEGVYTDTPRLDDANRFRMDEKELAAELQAKVEAIWPNVTEENLFEETDYKGYNAEFLKLFGFGVDGIDYEKDVAPDVALDLE.

Residues 48–53, 74–75, 111–112, and 139–140 each bind NAD(+); these read GASTGY, FE, DA, and LA. Tyrosine 225 contributes to the substrate binding site. Tyrosine 235 functions as the Proton donor in the catalytic mechanism. NAD(+) contacts are provided by residues lysine 244 and 273–275; that span reads LVT.

The protein belongs to the TER reductase family. Monomer.

It carries out the reaction a 2,3-saturated acyl-[ACP] + NAD(+) = a (2E)-enoyl-[ACP] + NADH + H(+). The protein operates within lipid metabolism; fatty acid biosynthesis. In terms of biological role, involved in the final reduction of the elongation cycle of fatty acid synthesis (FAS II). Catalyzes the reduction of a carbon-carbon double bond in an enoyl moiety that is covalently linked to an acyl carrier protein (ACP). This is Enoyl-[acyl-carrier-protein] reductase [NADH] from Saccharophagus degradans (strain 2-40 / ATCC 43961 / DSM 17024).